A 66-amino-acid polypeptide reads, in one-letter code: Small ribosomal subunit protein bS21 (66 aa).

It belongs to the bacterial ribosomal protein bS21 family.

The sequence is that of Small ribosomal subunit protein bS21 from Persephonella marina (strain DSM 14350 / EX-H1).